The chain runs to 26 residues: Dermaseptin-B5 (26 aa).

The residue at position 26 (V26) is a Valine amide.

Belongs to the frog skin active peptide (FSAP) family. Dermaseptin subfamily. Expressed by the skin glands.

It localises to the secreted. Functionally, possesses a potent antimicrobial activity against Gram-positive and Gram-negative bacteria. Probably acts by disturbing membrane functions with its amphipathic structure. The polypeptide is Dermaseptin-B5 (Phyllomedusa bicolor (Two-colored leaf frog)).